The primary structure comprises 288 residues: Beta-lactamase PSE-1 (288 aa).

Positions methionine 1–alanine 17 are cleaved as a signal peptide. Serine 65 acts as the Acyl-ester intermediate in catalysis. Cysteine 72 and cysteine 118 form a disulfide bridge. A substrate-binding site is contributed by arginine 229 to glycine 231.

This sequence belongs to the class-A beta-lactamase family. In terms of assembly, monomer.

The enzyme catalyses a beta-lactam + H2O = a substituted beta-amino acid. Its activity is regulated as follows. Inhibited by p-chloromercuribenzoate but not by cloxacillin. Its function is as follows. Hydrolyzes penicillin, ampicillin and carbenicillin but not other antibiotics including oxacillin, methicillin and cloxacillin. In Pseudomonas aeruginosa, this protein is Beta-lactamase PSE-1.